Here is a 601-residue protein sequence, read N- to C-terminus: MLNPENIRNFCIVAHIDHGKSTLSDRLIEKTKIIDERYHRNQMTDDMDIERERGITIKSHAVRIPYTAKDGKNYVLNFVDTPGHVDFSYEVSRAIASCEGAILIVDATQGVESQTLSNMYLALEHDLEILPVINKIDLPAADIDAAKHQIDHDLGLDSDAAVAVSAKTGENIDALFEAIITTFPPPKGSRDNPLQALIFDCHYDPYRGVVVHVRVFEGMIKPGMTIRFMNTGGEYKVEETGTFVLDLVKQDSLQAGEVGYIIAGIKTVSDVGVGDTITDAAAPCKAPLSGFKEVKPVVFSSVYPTDTNDYEELRESFEKLKLNDASLTWEKDSSLALGHGFRCGFLGLLHLEIVQERLEREFDQSVIFTAPSVRYKLTMRTGEEIICDNPADYPDEGLIASAEEPYIKATLITPTNYLGNVMSLCMEKRGVQTNMTYLDEKRVEMTYEMPLAEVLFDFYDRLKSISRGYASFDYEVIETRPTDLAKIDILINGKPVDALAQLAYKPSAYDKARLVCEKLKDEIPRQQFKIPIQGAIGSQIIARETISALRKDVLAKCYGGDITRKRKLLEKQKEGKKRMKMIGDVELPQSAFLAVLKTKED.

A tr-type G domain is found at 5-187 (ENIRNFCIVA…AIITTFPPPK (183 aa)). GTP contacts are provided by residues 17 to 22 (DHGKST) and 134 to 137 (NKID).

The protein belongs to the TRAFAC class translation factor GTPase superfamily. Classic translation factor GTPase family. LepA subfamily.

It localises to the cell inner membrane. The catalysed reaction is GTP + H2O = GDP + phosphate + H(+). Required for accurate and efficient protein synthesis under certain stress conditions. May act as a fidelity factor of the translation reaction, by catalyzing a one-codon backward translocation of tRNAs on improperly translocated ribosomes. Back-translocation proceeds from a post-translocation (POST) complex to a pre-translocation (PRE) complex, thus giving elongation factor G a second chance to translocate the tRNAs correctly. Binds to ribosomes in a GTP-dependent manner. The protein is Elongation factor 4 of Treponema denticola (strain ATCC 35405 / DSM 14222 / CIP 103919 / JCM 8153 / KCTC 15104).